Consider the following 96-residue polypeptide: Small ribosomal subunit protein bS6 (96 aa).

It belongs to the bacterial ribosomal protein bS6 family.

Binds together with bS18 to 16S ribosomal RNA. The polypeptide is Small ribosomal subunit protein bS6 (Streptomyces griseus subsp. griseus (strain JCM 4626 / CBS 651.72 / NBRC 13350 / KCC S-0626 / ISP 5235)).